A 472-amino-acid chain; its full sequence is Argininosuccinate lyase (472 aa).

This sequence belongs to the lyase 1 family. Argininosuccinate lyase subfamily.

The protein localises to the cytoplasm. It carries out the reaction 2-(N(omega)-L-arginino)succinate = fumarate + L-arginine. It functions in the pathway amino-acid biosynthesis; L-arginine biosynthesis; L-arginine from L-ornithine and carbamoyl phosphate: step 3/3. This chain is Argininosuccinate lyase, found in Polynucleobacter asymbioticus (strain DSM 18221 / CIP 109841 / QLW-P1DMWA-1) (Polynucleobacter necessarius subsp. asymbioticus).